The following is an 814-amino-acid chain: Rho GTPase-activating protein 44 (814 aa).

The BAR domain maps to Gln14 to Glu249. Residues Lys255–Phe445 enclose the Rho-GAP domain. Disordered stretches follow at residues Ala467–Ser493, Ser531–Thr768, and Ser784–Leu814. Residues Pro479–Arg489 are compositionally biased toward basic and acidic residues. Position 493 is a phosphoserine (Ser493). Low complexity-rich tracts occupy residues Ser531 to Pro541, Ser567 to Ser581, Ser598 to Gly612, Pro622 to Pro637, Ser684 to Ala704, and Ser741 to Thr752. The tract at residues Lys727 to Leu814 is interaction with BST2. A compositionally biased stretch (basic and acidic residues) spans Pro790–Ser805. Position 805 is a phosphoserine (Ser805). The PDZ-binding motif lies at Ser811 to Leu814.

Interacts with BST2 (via cytoplasmic domain). Interacts (probably via PDZ-binding motif) with SHANK3 (via PDZ domain); the interaction takes place in dendritic spines and promotes GRIA1 exocytosis. Expressed in brain, detected at high levels in hippocampal CA1 (at protein level).

It localises to the cell projection. The protein resides in the dendritic spine. It is found in the recycling endosome. The protein localises to the presynapse. Its subcellular location is the dendrite. In terms of biological role, GTPase-activating protein (GAP) that stimulates the GTPase activity of Rho-type GTPases. Thereby, controls Rho-type GTPases cycling between their active GTP-bound and inactive GDP-bound states. Acts as a GAP at least for CDC42 and RAC1. In neurons, is involved in dendritic spine formation and synaptic plasticity in a specific RAC1-GAP activity. Limits the initiation of exploratory dendritic filopodia. Recruited to actin-patches that seed filopodia, binds specifically to plasma membrane sections that are deformed inward by acto-myosin mediated contractile forces. Acts through GAP activity on RAC1 to reduce actin polymerization necessary for filopodia formation. In association with SHANK3, promotes GRIA1 exocytosis from recycling endosomes and spine morphological changes associated to long-term potentiation. This chain is Rho GTPase-activating protein 44, found in Rattus norvegicus (Rat).